The primary structure comprises 148 residues: Small ribosomal subunit protein uS7m (148 aa).

This sequence belongs to the universal ribosomal protein uS7 family. As to quaternary structure, part of the small ribosomal subunit.

It is found in the mitochondrion. Functionally, one of the primary rRNA binding proteins, it binds directly to 18S rRNA where it nucleates assembly of the head domain of the small subunit. The sequence is that of Small ribosomal subunit protein uS7m (RPS7) from Triticum aestivum (Wheat).